Reading from the N-terminus, the 358-residue chain is MKPFPRAEISSSALQNNLAVLRQQARASQVMAVVKANGYGHGLLNVANCLVNADGFGLARLEEALELRAGGVKARLLLLEGFFRSTDLPLLVAHDIDTVVHHESQIEMLEQVKLTKPVTVWLKVDSGMHRLGVTPEQFATVYARLMACPNIAKPIHLMTHFACADEPDNHYTDVQMAAFNELTAGLPGFRTLANSAGALYWPKSQGDWIRPGIALYGVSPVAGDCGTNHGLIPAMNLVSRLIAVRDHKANQPVGYGCYWTAKQDTRLGVVAIGYGDGYPRNAPEGTPVWVNGRRVPIVGRVSMDMLTVDLGQDATDKVGDDVLLWGQDLPVEEVAERIGTIAYELVTKLTPRVAVCLA.

Lys-35 serves as the catalytic Proton acceptor; specific for D-alanine. Lys-35 carries the post-translational modification N6-(pyridoxal phosphate)lysine. Arg-130 contributes to the substrate binding site. The active-site Proton acceptor; specific for L-alanine is the Tyr-255. A substrate-binding site is contributed by Met-303.

Belongs to the alanine racemase family. Pyridoxal 5'-phosphate is required as a cofactor.

It carries out the reaction L-alanine = D-alanine. Its pathway is amino-acid biosynthesis; D-alanine biosynthesis; D-alanine from L-alanine: step 1/1. In terms of biological role, catalyzes the interconversion of L-alanine and D-alanine. May also act on other amino acids. In Shewanella sp. (strain W3-18-1), this protein is Alanine racemase (alr).